A 310-amino-acid chain; its full sequence is Thioredoxin reductase (310 aa).

Residue 34–41 (NGMQPGGQ) coordinates FAD. Cysteines 135 and 138 form a disulfide. FAD is bound at residue 281–290 (DVQDKIYRQA).

It belongs to the class-II pyridine nucleotide-disulfide oxidoreductase family. As to quaternary structure, homodimer. FAD is required as a cofactor.

The protein resides in the cytoplasm. The enzyme catalyses [thioredoxin]-dithiol + NADP(+) = [thioredoxin]-disulfide + NADPH + H(+). This is Thioredoxin reductase (trxB) from Rickettsia typhi (strain ATCC VR-144 / Wilmington).